The following is a 307-amino-acid chain: MKENLILKESEVIRILYPPGIVQTDDCYLDEEGRIYTTDTICEGTHFRIEWSGPKEIAQKLVEVNVSDIAAGGGIPTKAFLNLGLSTQCSKEEWILPFSISLQESLSSYNIELCGGDTYRSSSLNLTLTLIGVTTKPWKRSGGKDGDFLYLTGSVGLSLLGYKILKEGLDIPEPLRSLALERHLTPKARLKVSKELSKNSPVSCCMDLTDGLLLDLPKLASSSNLGLKIDLEKIPILSNILTYLSLGEVLSSGEELELIFLSPVELPKTLCETSLTKIGNTTSDWKGVKFFQGNSEKTFEHLGFEHF.

Positions 26, 37, 38, and 39 each coordinate Mg(2+). Substrate is bound at residue His46. Positions 68 and 117 each coordinate Mg(2+). Residues 116 to 117 (GD) and Arg140 contribute to the ATP site. Residue Asp207 participates in Mg(2+) binding. ATP is bound at residue Thr209. Asp210 is a binding site for Mg(2+). Substrate-binding residues include Glu254 and Phe304.

Belongs to the thiamine-monophosphate kinase family.

The catalysed reaction is thiamine phosphate + ATP = thiamine diphosphate + ADP. It participates in cofactor biosynthesis; thiamine diphosphate biosynthesis; thiamine diphosphate from thiamine phosphate: step 1/1. Its function is as follows. Catalyzes the ATP-dependent phosphorylation of thiamine-monophosphate (TMP) to form thiamine-pyrophosphate (TPP), the active form of vitamin B1. This chain is Thiamine-monophosphate kinase, found in Leptospira interrogans serogroup Icterohaemorrhagiae serovar Lai (strain 56601).